The chain runs to 338 residues: RNA 3'-terminal phosphate cyclase (338 aa).

Residues Q103 and 283–287 (YLADQ) each bind ATP. Catalysis depends on H308, which acts as the Tele-AMP-histidine intermediate.

It belongs to the RNA 3'-terminal cyclase family. Type 1 subfamily.

Its subcellular location is the cytoplasm. It catalyses the reaction a 3'-end 3'-phospho-ribonucleotide-RNA + ATP = a 3'-end 2',3'-cyclophospho-ribonucleotide-RNA + AMP + diphosphate. In terms of biological role, catalyzes the conversion of 3'-phosphate to a 2',3'-cyclic phosphodiester at the end of RNA. The mechanism of action of the enzyme occurs in 3 steps: (A) adenylation of the enzyme by ATP; (B) transfer of adenylate to an RNA-N3'P to produce RNA-N3'PP5'A; (C) and attack of the adjacent 2'-hydroxyl on the 3'-phosphorus in the diester linkage to produce the cyclic end product. The biological role of this enzyme is unknown but it is likely to function in some aspects of cellular RNA processing. The protein is RNA 3'-terminal phosphate cyclase of Escherichia coli O81 (strain ED1a).